The sequence spans 178 residues: CDP-archaeol synthase (178 aa).

Transmembrane regions (helical) follow at residues 3-23 (IIYL…ANAT), 55-75 (TFFG…IFNL), 91-111 (GIVG…GSFI), 125-145 (ILDQ…FAPV), and 149-169 (MGIF…IIAY).

This sequence belongs to the CDP-archaeol synthase family. Mg(2+) is required as a cofactor.

It localises to the cell membrane. It carries out the reaction 2,3-bis-O-(geranylgeranyl)-sn-glycerol 1-phosphate + CTP + H(+) = CDP-2,3-bis-O-(geranylgeranyl)-sn-glycerol + diphosphate. The protein operates within membrane lipid metabolism; glycerophospholipid metabolism. Its function is as follows. Catalyzes the formation of CDP-2,3-bis-(O-geranylgeranyl)-sn-glycerol (CDP-archaeol) from 2,3-bis-(O-geranylgeranyl)-sn-glycerol 1-phosphate (DGGGP) and CTP. This reaction is the third ether-bond-formation step in the biosynthesis of archaeal membrane lipids. The polypeptide is CDP-archaeol synthase (Methanococcus aeolicus (strain ATCC BAA-1280 / DSM 17508 / OCM 812 / Nankai-3)).